A 79-amino-acid chain; its full sequence is Peptide Im-5 (79 aa).

An N-terminal signal peptide occupies residues 1–23; sequence MKYRKQLLVLFFAYFLVVNESEA. The propeptide occupies 49–79; that stretch reads RALMKRDLQDRMDPYQRNLKLDRYLKQLALD.

It belongs to the non-disulfide-bridged peptide (NDBP) superfamily. Medium-length antimicrobial peptide (group 3) family. In terms of tissue distribution, expressed by the venom gland.

It is found in the secreted. Its subcellular location is the target cell membrane. Its function is as follows. Antimicrobial peptide that may act by disrupting the integrity of the bacterial cell membrane. Has antibacterial activity against Gram-negative bacterium E.coli NBRC 3972 (MIC=10 uM) and against Gram-positive bacteria S.aureus NBRC 13276 (MIC=2.5-5 uM) and B.subtilis NBRC 3009 (MIC=0.5-1 uM). Also shows potent activity against antibiotic-sensitive and -resistant Acinetobacter baumannii (MIC=1.8-3.6 uM). Shows cytolytic activity against human and sheep erythrocytes. Toxic to cricket A.domestica. This Isometrus maculatus (Lesser brown scorpion) protein is Peptide Im-5.